Reading from the N-terminus, the 103-residue chain is Large ribosomal subunit protein uL24 (103 aa).

Belongs to the universal ribosomal protein uL24 family. In terms of assembly, part of the 50S ribosomal subunit.

In terms of biological role, one of two assembly initiator proteins, it binds directly to the 5'-end of the 23S rRNA, where it nucleates assembly of the 50S subunit. Functionally, one of the proteins that surrounds the polypeptide exit tunnel on the outside of the subunit. This chain is Large ribosomal subunit protein uL24, found in Geobacillus sp. (strain WCH70).